A 152-amino-acid polypeptide reads, in one-letter code: Xanthine-guanine phosphoribosyltransferase (152 aa).

5-phospho-alpha-D-ribose 1-diphosphate is bound by residues 37 to 38 (RG), arginine 69, and 88 to 96 (DDLVDTGGT). Residue arginine 69 participates in GMP binding. Aspartate 89 is a Mg(2+) binding site. Guanine-binding residues include aspartate 92 and isoleucine 135. Xanthine is bound by residues aspartate 92 and isoleucine 135. GMP-binding positions include 92–96 (DTGGT) and 134–135 (WI).

This sequence belongs to the purine/pyrimidine phosphoribosyltransferase family. XGPT subfamily. Homotetramer. Mg(2+) is required as a cofactor.

The protein resides in the cell inner membrane. The catalysed reaction is GMP + diphosphate = guanine + 5-phospho-alpha-D-ribose 1-diphosphate. It catalyses the reaction XMP + diphosphate = xanthine + 5-phospho-alpha-D-ribose 1-diphosphate. It carries out the reaction IMP + diphosphate = hypoxanthine + 5-phospho-alpha-D-ribose 1-diphosphate. The protein operates within purine metabolism; GMP biosynthesis via salvage pathway; GMP from guanine: step 1/1. It functions in the pathway purine metabolism; XMP biosynthesis via salvage pathway; XMP from xanthine: step 1/1. In terms of biological role, purine salvage pathway enzyme that catalyzes the transfer of the ribosyl-5-phosphate group from 5-phospho-alpha-D-ribose 1-diphosphate (PRPP) to the N9 position of the 6-oxopurines guanine and xanthine to form the corresponding ribonucleotides GMP (guanosine 5'-monophosphate) and XMP (xanthosine 5'-monophosphate), with the release of PPi. To a lesser extent, also acts on hypoxanthine. The protein is Xanthine-guanine phosphoribosyltransferase of Shigella boydii serotype 18 (strain CDC 3083-94 / BS512).